Reading from the N-terminus, the 357-residue chain is Leucoanthocyanidin dioxygenase (357 aa).

Positions 212-311 (LLLQMKINYY…RISWAVFCEP (100 aa)) constitute a Fe2OG dioxygenase domain. Fe cation-binding residues include His-236, Asp-238, and His-292.

The protein belongs to the iron/ascorbate-dependent oxidoreductase family. The cofactor is Fe cation. L-ascorbate is required as a cofactor.

It carries out the reaction a (2R,3S,4S)-leucoanthocyanidin + 2-oxoglutarate + O2 = a 4-H-anthocyanidin with a 3-hydroxy group + succinate + CO2 + 2 H2O. The protein operates within pigment biosynthesis; anthocyanin biosynthesis. In terms of biological role, oxidation of leucoanthocyanidins into anthocyanidins. The chain is Leucoanthocyanidin dioxygenase (ANS) from Malus domestica (Apple).